Consider the following 334-residue polypeptide: Aspartate carbamoyltransferase catalytic subunit (334 aa).

Arg70 and Thr71 together coordinate carbamoyl phosphate. Residue Lys98 coordinates L-aspartate. Carbamoyl phosphate is bound by residues Arg120, His150, and Gln153. L-aspartate-binding residues include Arg183 and Arg239. Residues Gly280 and Pro281 each coordinate carbamoyl phosphate.

It belongs to the aspartate/ornithine carbamoyltransferase superfamily. ATCase family. As to quaternary structure, heterododecamer (2C3:3R2) of six catalytic PyrB chains organized as two trimers (C3), and six regulatory PyrI chains organized as three dimers (R2).

It catalyses the reaction carbamoyl phosphate + L-aspartate = N-carbamoyl-L-aspartate + phosphate + H(+). It participates in pyrimidine metabolism; UMP biosynthesis via de novo pathway; (S)-dihydroorotate from bicarbonate: step 2/3. Its function is as follows. Catalyzes the condensation of carbamoyl phosphate and aspartate to form carbamoyl aspartate and inorganic phosphate, the committed step in the de novo pyrimidine nucleotide biosynthesis pathway. The protein is Aspartate carbamoyltransferase catalytic subunit of Pseudomonas paraeruginosa (strain DSM 24068 / PA7) (Pseudomonas aeruginosa (strain PA7)).